A 957-amino-acid polypeptide reads, in one-letter code: Calsyntenin-3 (957 aa).

The N-terminal stretch at 1-19 is a signal peptide; it reads MTLLLVSLLLASLLQISSG. At 1-21 the chain is on the cytoplasmic side; it reads MTLLLVSLLLASLLQISSGNK. At 20–848 the chain is on the extracellular side; the sequence is NKANKHKPWI…SHRNSMVPSA (829 aa). The helical intramembrane region spans 22–42; the sequence is ANKHKPWIEAEYQGIVMENDN. Cadherin domains lie at 29–145 and 146–246; these read IEAE…APVF and VERL…KPSW. Over 43 to 73 the chain is Cytoplasmic; sequence TVLLNPPLFALDKDAPLRYAGEICGFRLHGS. Positions 74–94 form an intramembrane region, helical; that stretch reads GVPFKAVILDKATGEGLIRAK. Topologically, residues 95-139 are cytoplasmic; sequence EPVDCEAQKEHTFTTQAYDCVDGPDGANTKKSHKATVHVRVNDVN. Residues 140–160 constitute an intramembrane region (helical); sequence EFAPVFVERLYRAAVTEGKLY. Over 161-248 the chain is Cytoplasmic; it reads DRILRVEAID…KPTCKPSWQG (88 aa). Residues 249-269 form a helical membrane-spanning segment; the sequence is WNKRIEYAPGAGSLALFPGIR. Topologically, residues 270-357 are lumenal; that stretch reads LETCDEPLWN…GTQAVQVPLG (88 aa). N-linked (GlcNAc...) asparagine glycans are attached at residues Asn-299, Asn-327, Asn-347, Asn-508, and Asn-741. Residues 849-869 traverse the membrane as a helical segment; it reads ATLIIVVCVGFLVLMVILGLV. Residues 870-957 lie on the Cytoplasmic side of the membrane; the sequence is RIHSLHRRVS…RIIESPPHRY (88 aa). The disordered stretch occupies residues 916–957; it reads QQTGVAGVAGGQQEEEDSSDSEAADSPSSDERRIIESPPHRY. Positions 928–938 are enriched in acidic residues; it reads QEEEDSSDSEA. Positions 944-957 are enriched in basic and acidic residues; the sequence is SDERRIIESPPHRY.

The protein belongs to the calsyntenin family. As to quaternary structure, interacts (via cadherin domains) with both alpha and beta isoforms of neurexins (NRXN1, NRXN2 and NRXN3). Directly interacts with APBA2. Forms a tripartite complex with APBA2 and APP. Interacts with low affinity with KLC1. Interacts with SLC23A2/SVCT2. Interacts with CIDEA; inhibiting the lipid transferase activity of CIDEA. Interacts with CIDEC; inhibiting the lipid transferase activity of CIDEC. Proteolytically processed under normal cellular conditions. A primary zeta-cleavage generates a large extracellular (soluble) N-terminal domain (sAlc) and a short C-terminal transmembrane fragment (CTF1). A secondary cleavage catalyzed by gamma-secretase within the transmembrane domain releases the beta-Alc-beta chain in the extracellular milieu and produces an intracellular fragment (AlcICD). This processing is strongly suppressed in the tripartite complex formed with APBA2 and APP, which seems to prevent the association with gamma-secretase. In terms of processing, ubiquitinated: endoplasmic reticulum-localized protein is ubiquitinated and degraded by the endoplasmic reticulum-associated degradation (ERAD) pathway.

Its subcellular location is the postsynaptic cell membrane. The protein localises to the endoplasmic reticulum membrane. It is found in the golgi apparatus membrane. It localises to the cell projection. The protein resides in the dendrite. Its subcellular location is the lipid droplet. Postsynaptic adhesion molecule that binds to presynaptic neurexins to mediate both excitatory and inhibitory synapse formation. Promotes synapse development by acting as a cell adhesion molecule at the postsynaptic membrane, which associates with both neurexin-alpha and neurexin-beta proteins at the presynaptic membrane. Regulates the balance between excitatory and inhibitory synapses by inhibiting formation of excitatory parallel-fiber synapses and promoting formation of inhibitory synapses in the same neuron. May also be involved in ascorbate (vitamin C) uptake via its interaction with SLC23A2/SVCT2. Complex formation with APBA2 and APP, stabilizes APP metabolism and enhances APBA2-mediated suppression of beta-APP40 secretion, due to the retardation of intracellular APP maturation. Functionally, adipose-specific isoform that plays a key role in adaptive thermogenesis. Facilitates the efficient use of stored triglyceride by promoting multilocular morphology of thermogenic adipocytes: acts by inhibiting the activity of CIDEA and CIDEC on lipid droplets, thereby preventing lipid droplet fusion and facilitating lipid utilization. May also participate in adaptive thermogenesis by promoting sympathetic innervation of thermogenic adipose tissue: acts by driving secretion of neurotrophic factor S100B from brown adipocytes, stimulating neurite outgrowth from sympathetic neurons. This is Calsyntenin-3 from Rattus norvegicus (Rat).